The primary structure comprises 394 residues: Chalcone synthase (394 aa).

Cys168 is a catalytic residue.

This sequence belongs to the thiolase-like superfamily. Chalcone/stilbene synthases family.

It carries out the reaction (E)-4-coumaroyl-CoA + 3 malonyl-CoA + 3 H(+) = 2',4,4',6'-tetrahydroxychalcone + 3 CO2 + 4 CoA. The protein operates within secondary metabolite biosynthesis; flavonoid biosynthesis. The primary product of this enzyme is 4,2',4',6'-tetrahydroxychalcone (also termed naringenin-chalcone or chalcone) which can under specific conditions spontaneously isomerize into naringenin. This chain is Chalcone synthase (CHS), found in Raphanus sativus (Radish).